Here is an 86-residue protein sequence, read N- to C-terminus: RNA-binding protein Hfq (86 aa).

One can recognise a Sm domain in the interval 9-69 (DRFLNILRTS…VSTIMPESFV (61 aa)).

It belongs to the Hfq family. In terms of assembly, homohexamer.

In terms of biological role, RNA chaperone that binds small regulatory RNA (sRNAs) and mRNAs to facilitate mRNA translational regulation in response to envelope stress, environmental stress and changes in metabolite concentrations. Also binds with high specificity to tRNAs. This Thermosipho melanesiensis (strain DSM 12029 / CIP 104789 / BI429) protein is RNA-binding protein Hfq.